The chain runs to 154 residues: Deoxyuridine 5'-triphosphate nucleotidohydrolase (154 aa).

Substrate is bound by residues arginine 64 to glycine 66, asparagine 77, threonine 81 to aspartate 83, and lysine 91.

It belongs to the dUTPase family. As to quaternary structure, homotrimer. The cofactor is Mg(2+).

The catalysed reaction is dUTP + H2O = dUMP + diphosphate + H(+). The protein operates within pyrimidine metabolism; dUMP biosynthesis; dUMP from dCTP (dUTP route): step 2/2. Functionally, this enzyme is involved in nucleotide metabolism: it produces dUMP, the immediate precursor of thymidine nucleotides and it decreases the intracellular concentration of dUTP so that uracil cannot be incorporated into DNA. The protein is Deoxyuridine 5'-triphosphate nucleotidohydrolase of Mycobacterium bovis (strain BCG / Pasteur 1173P2).